The following is a 592-amino-acid chain: Leucine-rich repeat and immunoglobulin-like domain-containing nogo receptor-interacting protein 3 (592 aa).

An N-terminal signal peptide occupies residues 1–24 (MTCWLCVLSLPLLLLPAAPPPAGG). One can recognise an LRRNT domain in the interval 25–54 (CPARCECTVQTRAVACTRRRLTAVPDGIPA). At 25-531 (CPARCECTVQ…LDLTTILVST (507 aa)) the chain is on the extracellular side. 11 LRR repeats span residues 55-76 (ETRL…DLAA), 79-100 (ALEE…AFAN), 103-124 (RLRV…VFTR), 127-148 (NLTL…TFQD), 151-172 (SLRR…AFAG), 175-196 (ALEE…SLGH), 207-228 (HLAI…LHLE), 247-268 (NLTS…ALRH), 271-292 (HLTC…SFRD), 295-316 (RLRE…AFLG), and 319-340 (QIRL…TFHS). N-linked (GlcNAc...) asparagine glycosylation is present at N127. N185 carries N-linked (GlcNAc...) asparagine glycosylation. 3 N-linked (GlcNAc...) asparagine glycosylation sites follow: N247, N257, and N276. N324 carries an N-linked (GlcNAc...) asparagine glycan. The LRRCT domain maps to 352 to 406 (NPLACDCRLLWIVQRRKTLNFDGRLPACATPAEVRGDALRNLPDSVLFEYFVCRK). The 90-residue stretch at 407-496 (PKIRERRLQR…GNDTYFATLT (90 aa)) folds into the Ig-like C2-type domain. An intrachain disulfide couples C429 to C480. Residues N488 and N512 are each glycosylated (N-linked (GlcNAc...) asparagine). The helical transmembrane segment at 532-552 (AMGCITFLGVVLFCFVLLFVW) threads the bilayer. Topologically, residues 553–592 (SRGRGQHKNNFSVEYSFRKVDGPAAAAGQGGARKFNMKMI) are cytoplasmic.

The protein localises to the membrane. The protein is Leucine-rich repeat and immunoglobulin-like domain-containing nogo receptor-interacting protein 3 (LINGO3) of Homo sapiens (Human).